The following is a 287-amino-acid chain: Putative daunorubicin C-13 ketoreductase DnrU (287 aa).

24–30 (GATSGIG) serves as a coordination point for NADP(+). Ser149 is a substrate binding site. The Proton acceptor role is filled by Tyr175.

This sequence belongs to the short-chain dehydrogenases/reductases (SDR) family.

Could reduce the 13-carbonyl of daunorubicin to produce (13S)-13-dihydrodaunorubicin. Could also be able to reduce the 13-carbonyl of doxorubicin. This chain is Putative daunorubicin C-13 ketoreductase DnrU, found in Streptomyces sp. (strain C5).